The chain runs to 242 residues: MGGRGMGISELKLPAAVKVHELADAKTLAATLAHDVAERLRAAIAAKGQACVVLSGGRSPVPFLEKLASEPLDWAKVTVSLADERWVPVEHADSNAGLLARHLLTGAAAKARFVGLYQQAENLDAAALKADQALTGLPPIDVLVLGMGDDGHTASLFPASPNLEAGLDLASTRRCLPLLAPSVPHQRLSMTRSLLASAAFIALSVQGPGKLATLRAALAGNDLTEMPIRAFLHDPLDIYWCP.

Belongs to the glucosamine/galactosamine-6-phosphate isomerase family. 6-phosphogluconolactonase subfamily.

It catalyses the reaction 6-phospho-D-glucono-1,5-lactone + H2O = 6-phospho-D-gluconate + H(+). It participates in carbohydrate degradation; pentose phosphate pathway; D-ribulose 5-phosphate from D-glucose 6-phosphate (oxidative stage): step 2/3. Hydrolysis of 6-phosphogluconolactone to 6-phosphogluconate. This chain is 6-phosphogluconolactonase (pgl), found in Pseudomonas putida (Arthrobacter siderocapsulatus).